The primary structure comprises 685 residues: Tyrosine-protein kinase transmembrane receptor Ror (685 aa).

The N-terminal stretch at 1-24 (MNKYSAFIVCISLVLLFTKKDVGS) is a signal peptide. Residues 25–317 (HNVDSRIYGF…PKCADKIWIA (293 aa)) are Extracellular-facing. The region spanning 36–225 (QSSGICHIYN…LPQHKDCLSL (190 aa)) is the FZ domain. 8 cysteine pairs are disulfide-bonded: Cys41/Cys106, Cys49/Cys99, Cys90/Cys192, Cys180/Cys222, Cys184/Cys213, Cys237/Cys310, Cys258/Cys292, and Cys280/Cys305. Residues Asn45 and Asn63 are each glycosylated (N-linked (GlcNAc...) asparagine). A Phosphothreonine modification is found at Thr112. A glycan (N-linked (GlcNAc...) asparagine) is linked at Asn129. Ser131 carries the phosphoserine modification. N-linked (GlcNAc...) asparagine glycosylation occurs at Asn144. The Kringle domain occupies 236–310 (NCYWEDGSTY…IIELCDIPKC (75 aa)). Asn250 carries N-linked (GlcNAc...) asparagine glycosylation. A helical transmembrane segment spans residues 318–338 (IVGTTAAIILIFIIIFAIILF). The Cytoplasmic segment spans residues 339 to 685 (KRRTIMHYGM…GHFKASNPEM (347 aa)). In terms of domain architecture, Protein kinase spans 410–677 (VEFLEELGEG…NRLKTWHEGH (268 aa)). Residues 416-424 (LGEGAFGKV) and Lys442 each bind ATP. Residue Asp539 is the Proton acceptor of the active site. Residues Tyr565, Tyr569, and Tyr570 each carry the phosphotyrosine; by autocatalysis modification.

This sequence belongs to the protein kinase superfamily. Tyr protein kinase family. ROR subfamily. Expressed in neurons of the developing nervous system.

The protein localises to the membrane. It carries out the reaction L-tyrosyl-[protein] + ATP = O-phospho-L-tyrosyl-[protein] + ADP + H(+). Functionally, tyrosine-protein kinase receptor that functions during early stages of neuronal development. This Drosophila melanogaster (Fruit fly) protein is Tyrosine-protein kinase transmembrane receptor Ror (Ror).